A 382-amino-acid chain; its full sequence is Anhydro-N-acetylmuramic acid kinase (382 aa).

An ATP-binding site is contributed by glycine 9–aspartate 16.

It belongs to the anhydro-N-acetylmuramic acid kinase family.

The catalysed reaction is 1,6-anhydro-N-acetyl-beta-muramate + ATP + H2O = N-acetyl-D-muramate 6-phosphate + ADP + H(+). It participates in amino-sugar metabolism; 1,6-anhydro-N-acetylmuramate degradation. The protein operates within cell wall biogenesis; peptidoglycan recycling. Functionally, catalyzes the specific phosphorylation of 1,6-anhydro-N-acetylmuramic acid (anhMurNAc) with the simultaneous cleavage of the 1,6-anhydro ring, generating MurNAc-6-P. Is required for the utilization of anhMurNAc either imported from the medium or derived from its own cell wall murein, and thus plays a role in cell wall recycling. The polypeptide is Anhydro-N-acetylmuramic acid kinase (Bacillus cereus (strain Q1)).